The chain runs to 278 residues: Movement protein (278 aa).

The disordered stretch occupies residues 256-278 (TLRQEGRDKGDNRRVGVGESPTN). Basic and acidic residues predominate over residues 259-271 (QEGRDKGDNRRVG).

It belongs to the tobamoviruses movement protein family.

The chain is Movement protein from Vitis vinifera (Grape).